Consider the following 228-residue polypeptide: ATP-dependent dethiobiotin synthetase BioD (228 aa).

Residue 13-18 coordinates ATP; it reads DIGKTF. Position 17 (threonine 17) interacts with Mg(2+). The active site involves lysine 38. Residue serine 42 coordinates substrate. Residues aspartate 55, 116–119, 179–180, and 208–210 contribute to the ATP site; these read EGSG, NK, and PKI. Mg(2+) is bound by residues aspartate 55 and glutamate 116.

This sequence belongs to the dethiobiotin synthetase family. As to quaternary structure, homodimer. Requires Mg(2+) as cofactor.

It is found in the cytoplasm. It catalyses the reaction (7R,8S)-7,8-diammoniononanoate + CO2 + ATP = (4R,5S)-dethiobiotin + ADP + phosphate + 3 H(+). It functions in the pathway cofactor biosynthesis; biotin biosynthesis; biotin from 7,8-diaminononanoate: step 1/2. In terms of biological role, catalyzes a mechanistically unusual reaction, the ATP-dependent insertion of CO2 between the N7 and N8 nitrogen atoms of 7,8-diaminopelargonic acid (DAPA, also called 7,8-diammoniononanoate) to form a ureido ring. The protein is ATP-dependent dethiobiotin synthetase BioD of Clostridium perfringens (strain ATCC 13124 / DSM 756 / JCM 1290 / NCIMB 6125 / NCTC 8237 / Type A).